A 629-amino-acid chain; its full sequence is Glycerol-3-phosphate dehydrogenase SDP6, mitochondrial (629 aa).

Residues 1–48 (MSLASIRRLAAGAAVIAAASGGAVYLSPSVASSDKGGGPILDSLRRRL) constitute a mitochondrion transit peptide. 75-103 (DVLVIGGGATGSGVALDAVTRGLRVGLVE) contacts FAD.

The protein belongs to the FAD-dependent glycerol-3-phosphate dehydrogenase family. FAD serves as cofactor. Expressed in germinating seedlings. Also detected in roots, leaves, flowers, developing siliques and germinating seeds.

It is found in the mitochondrion inner membrane. It catalyses the reaction a quinone + sn-glycerol 3-phosphate = dihydroxyacetone phosphate + a quinol. Its pathway is polyol metabolism; glycerol degradation via glycerol kinase pathway; glycerone phosphate from sn-glycerol 3-phosphate (anaerobic route): step 1/1. In terms of biological role, required for glycerol catabolism and involved in NADH/NAD(+) homeostasis. Essential for postgerminative growth and seedling establishment. The chain is Glycerol-3-phosphate dehydrogenase SDP6, mitochondrial from Arabidopsis thaliana (Mouse-ear cress).